The following is a 108-amino-acid chain: MVQAAILFILAGLAEIGGGYLVWLWLREARPYWYGVIGAIILVFYGIIPTLQKFPSFGRVYAAYGGVFIILAVLWGWGVDKKMPDTYDWIGAAICLVGVTVMLWAPRQ.

4 helical membrane passes run 6–26 (ILFI…WLWL), 31–51 (PYWY…IPTL), 60–80 (VYAA…WGVD), and 86–106 (TYDW…LWAP).

The protein belongs to the UPF0060 family.

It localises to the cell membrane. This Desulfitobacterium hafniense (strain Y51) protein is UPF0060 membrane protein DSY4157.